The sequence spans 391 residues: Phosphoglycerate kinase (391 aa).

Substrate contacts are provided by residues 21-23 (DLN), R36, 59-62 (HLGR), R113, and R146. Residues K197, E319, and 345-348 (GGDT) contribute to the ATP site.

It belongs to the phosphoglycerate kinase family. As to quaternary structure, monomer.

The protein localises to the cytoplasm. It carries out the reaction (2R)-3-phosphoglycerate + ATP = (2R)-3-phospho-glyceroyl phosphate + ADP. It participates in carbohydrate degradation; glycolysis; pyruvate from D-glyceraldehyde 3-phosphate: step 2/5. The protein is Phosphoglycerate kinase of Xanthomonas axonopodis pv. citri (strain 306).